A 313-amino-acid chain; its full sequence is tRNA dimethylallyltransferase (313 aa).

14–21 (GPTASGKT) provides a ligand contact to ATP. Residue 16 to 21 (TASGKT) participates in substrate binding. Interaction with substrate tRNA stretches follow at residues 39–42 (DSAL) and 163–167 (QRIGR).

Belongs to the IPP transferase family. Monomer. The cofactor is Mg(2+).

The catalysed reaction is adenosine(37) in tRNA + dimethylallyl diphosphate = N(6)-dimethylallyladenosine(37) in tRNA + diphosphate. Catalyzes the transfer of a dimethylallyl group onto the adenine at position 37 in tRNAs that read codons beginning with uridine, leading to the formation of N6-(dimethylallyl)adenosine (i(6)A). The protein is tRNA dimethylallyltransferase of Thiobacillus denitrificans (strain ATCC 25259 / T1).